A 101-amino-acid polypeptide reads, in one-letter code: QTGVRSCNCAGRSFTGTDVTNAIRSARAGGSGNYPHVYNNFEGFSFSCTPTFFEFPVFRGSVYSGGSPGADRVIYDQSGRFCACLTHTGAPSTNGFVECRF.

Glutamine 1 carries the post-translational modification Pyrrolidone carboxylic acid. 3 disulfides stabilise this stretch: cysteine 7-cysteine 84, cysteine 9-cysteine 99, and cysteine 48-cysteine 82. The active site involves histidine 36. Residue glutamate 54 is the Proton acceptor of the active site. The active-site Proton donor is the histidine 87.

The protein belongs to the ribonuclease N1/T1 family.

It catalyses the reaction [RNA] containing guanosine + H2O = an [RNA fragment]-3'-guanosine-3'-phosphate + a 5'-hydroxy-ribonucleotide-3'-[RNA fragment].. Inhibited by divalent cations. Inhibition decreases in the order zinc, lead, cadmium, nickel, mercury. The polypeptide is Guanyl-specific ribonuclease Po1 (Pleurotus ostreatus (Oyster mushroom)).